The primary structure comprises 399 residues: Bone morphogenetic protein 8A (399 aa).

The first 19 residues, 1-19 (MAMRPGPLWLLGLALCALG), serve as a signal peptide directing secretion. Positions 20–260 (GGHGPRPPHT…ASQSPVRAPR (241 aa)) are excised as a propeptide. The N-linked (GlcNAc...) asparagine glycan is linked to Asn155. The interval 257-286 (RAPRAARPLKRRQPKKTNELPHPNKLPGIF) is disordered. Intrachain disulfides connect Cys298/Cys364, Cys327/Cys396, and Cys331/Cys398. Residue Asn340 is glycosylated (N-linked (GlcNAc...) asparagine).

The protein belongs to the TGF-beta family. In terms of assembly, homodimer; disulfide-linked. In terms of tissue distribution, expressed in testis. expressed in trophoblast cells of the labyrinthine region of the placenta and in the inner root sheath of hair follicles of early postnatal skin. Expressed predominantly in the neonatal mouse spermatogonia.

The protein resides in the secreted. Functionally, growth factor of the TGF-beta superfamily that plays important role in various biological processes, including spermatogenesis, osteogenesis, steroidogenesis as well as regulation of energy balance. Initiates the canonical BMP signaling cascade by associating with type I receptor BMPR1A and type II receptor BMPR2. Once all three components are bound together in a complex at the cell surface, BMPR2 phosphorylates and activates BMPR1A. In turn, BMPR1A propagates signal by phosphorylating SMAD1/5/8 that travel to the nucleus and act as activators and repressors of transcription of target genes. In addition, activates the SMAD2/3 pathway. The protein is Bone morphogenetic protein 8A (Bmp8a) of Mus musculus (Mouse).